The chain runs to 462 residues: A-type ATP synthase subunit B (462 aa).

The protein belongs to the ATPase alpha/beta chains family. Has multiple subunits with at least A(3), B(3), C, D, E, F, H, I and proteolipid K(x).

It is found in the cell membrane. Its function is as follows. Component of the A-type ATP synthase that produces ATP from ADP in the presence of a proton gradient across the membrane. The B chain is a regulatory subunit. This chain is A-type ATP synthase subunit B, found in Methanococcus vannielii (strain ATCC 35089 / DSM 1224 / JCM 13029 / OCM 148 / SB).